Here is a 2136-residue protein sequence, read N- to C-terminus: Methylcytosine dioxygenase TET1 (2136 aa).

2 stretches are compositionally biased toward basic residues: residues 1–12 (MSRSRHARPSRL) and 20–31 (KKKKNSQLRKTT). The segment at 1 to 47 (MSRSRHARPSRLVRKEDVNKKKKNSQLRKTTKGANKNVASVKTLSPG) is disordered. Over residues 32 to 43 (KGANKNVASVKT) the composition is skewed to polar residues. A sufficient for binding to genomic CpG islands region spans residues 528–674 (LGIAQLSQAG…NGPKSESMDY (147 aa)). A CXXC-type zinc finger spans residues 584–625 (EKKKRKRCGVCEPCQQKTNCGECTYCKNRKNSHQICKKRKCE). Zn(2+)-binding residues include Cys-591, Cys-594, Cys-597, Cys-603, Cys-606, Cys-609, Cys-619, and Cys-624. Composition is skewed to basic and acidic residues over residues 712–724 (QNKK…HVKG), 732–743 (EAEKSKNSEVDK), and 849–869 (IHNE…EPKD). 4 disordered regions span residues 712 to 746 (QNKK…KKRT), 849 to 876 (IHNE…VQPS), 899 to 923 (QLSE…EQRT), and 1119 to 1169 (EKGT…VSYQ). Residue Ser-871 is modified to Phosphoserine. Residues 901–911 (SEAPSENSSPS) show a composition bias toward low complexity. The span at 1119-1139 (EKGTIQQKPPSSVHNNHGSSL) shows a compositional bias: polar residues. Residues 1146 to 1163 (TQKKTKSTPSRDRRKKKP) are compositionally biased toward basic residues. Residues Cys-1422, Cys-1424, Cys-1482, His-1508, and Cys-1510 each contribute to the Zn(2+) site. Position 1551 (Arg-1551) interacts with 2-oxoglutarate. Positions 1561, 1563, 1579, and 1588 each coordinate Zn(2+). The interaction with DNA stretch occupies residues 1580 to 1593 (SWSMYFNGCKFGRS). Lys-1589 is covalently cross-linked (Glycyl lysine isopeptide (Lys-Gly) (interchain with G-Cter in ubiquitin)). Cys-1648 lines the Zn(2+) pocket. A 2-oxoglutarate-binding site is contributed by Cys-1664. His-1670 contacts Zn(2+). Fe cation contacts are provided by His-1672 and Asp-1674. Residue Asn-1677 coordinates substrate. His-1706 lines the 2-oxoglutarate pocket. Disordered stretches follow at residues 1774–1897 (EKKP…AAAD) and 1919–1984 (EPLI…SPAE). The segment covering 1786–1800 (NSTTTNNSKPSSLPT) has biased composition (low complexity). Polar residues-rich tracts occupy residues 1824–1833 (SSDNTKTYSL) and 1937–1953 (HQPN…QDLA). The span at 1957–1976 (MEEDEQHSEADEPPSDEPLS) shows a compositional bias: acidic residues. His-2028 lines the Fe cation pocket. 2043–2045 (RLS) contributes to the 2-oxoglutarate binding site. 2049-2051 (YQH) contacts substrate. A Zn(2+)-binding site is contributed by His-2059. Residues 2074 to 2087 (KNKKMKASEQKDQA) are compositionally biased toward basic and acidic residues. Positions 2074 to 2100 (KNKKMKASEQKDQAANEGPEQSSEVNE) are disordered.

This sequence belongs to the TET family. Interacts with SIN3A; recruits the transcriptional corepressor SIN3A to gene promoters. Interacts with HCFC1. Interacts (via C-terminus) with OGT. Found in a complex composed of at least SINHCAF, SIN3A, HDAC1, SAP30, RBBP4, OGT and TET1. Interacts with QSER1. Interacts with NONO (via DNA-binding domain); this interaction recruits TET1 to genomic loci. Interacts with FOXA2; this interaction may recruit TET1 to specific enhancers to preserve their unmethylated status and hence allowing gene expression. Interacts with RNF2. Directly interacts (via C-terminus) with the DCAF1 component of the CRL4(VprBP) E3 ubiquitin-protein ligase complex. As to quaternary structure, interacts with UHRF1; this interaction induces the recruitment of TET1 to replicating heterochromatin. Interacts with DCAF1. Requires Fe(2+) as cofactor. It depends on Zn(2+) as a cofactor. Glycosylated. Interaction with OGT leads to GlcNAcylation. In terms of processing, monoubiquitinated at Lys-1589 by the DCX (DDB1-CUL4-X-box) E3 ubiquitin-protein ligase complex called CRL4(VprBP) or CUL4A-RBX1-DDB1-DCAF1/VPRBP complex; this modification promotes binding to DNA. As to expression, expressed in fetal heart, lung and brain, and in adult skeletal muscle, thymus and ovary. Not detected in adult heart, lung or brain. Up-regulated in glioblastoma cells (at protein level). In terms of tissue distribution, expressed in embryonic stem cells (at protein level).

Its subcellular location is the nucleus. It localises to the chromosome. It carries out the reaction a 5-methyl-2'-deoxycytidine in DNA + 2-oxoglutarate + O2 = a 5-hydroxymethyl-2'-deoxycytidine in DNA + succinate + CO2. The enzyme catalyses a 5-hydroxymethyl-2'-deoxycytidine in DNA + 2-oxoglutarate + O2 = a 5-formyl-2'-deoxycytidine in DNA + succinate + CO2 + H2O. It catalyses the reaction a 5-formyl-2'-deoxycytidine in DNA + 2-oxoglutarate + O2 = a 5-carboxyl-2'-deoxycytidine in DNA + succinate + CO2 + H(+). In terms of biological role, dioxygenase that plays a key role in active DNA demethylation, by catalyzing the sequential oxidation of the modified genomic base 5-methylcytosine (5mC) into 5-hydroxymethylcytosine (5hmC), 5-formylcytosine (5fC), and 5-carboxylcytosine (5caC). In addition to its role in DNA demethylation, plays a more general role in chromatin regulation by recruiting histone modifying protein complexes to alter histone marks and chromatin accessibility, leading to both activation and repression of gene expression. Plays therefore a role in many biological processes, including stem cell maintenance, T- and B-cell development, inflammation regulation, genomic imprinting, neural activity or DNA repair. Involved in the balance between pluripotency and lineage commitment of cells and plays a role in embryonic stem cells maintenance and inner cell mass cell specification. Together with QSER1, plays an essential role in the protection and maintenance of transcriptional and developmental programs to inhibit the binding of DNMT3A/3B and therefore de novo methylation. May play a role in pancreatic beta-cell specification during development. In this context, may function as an upstream epigenetic regulator of PAX4 presumably through direct recruitment by FOXA2 to a PAX4 enhancer to preserve its unmethylated status, thereby potentiating PAX4 expression to adopt beta-cell fate during endocrine lineage commitment. Under DNA hypomethylation conditions, such as in female meiotic germ cells, may induce epigenetic reprogramming of pericentromeric heterochromatin (PCH), the constitutive heterochromatin of pericentromeric regions. PCH forms chromocenters in the interphase nucleus and chromocenters cluster at the prophase of meiosis. In this context, may also be essential for chromocenter clustering in a catalytic activity-independent manner, possibly through the recruitment polycomb repressive complex 1 (PRC1) to the chromocenters. During embryonic development, may be required for normal meiotic progression in oocytes and meiotic gene activation. Binds preferentially to DNA containing cytidine-phosphate-guanosine (CpG) dinucleotides over CpH (H=A, T, and C), hemimethylated-CpG and hemimethylated-hydroxymethyl-CpG. Its function is as follows. Dioxygenase that plays a key role in active DNA demethylation. Binds to promoters, particularly to those with high CG content. In hippocampal neurons, isoform 1 regulates the expression of a unique subset of genes compared to isoform 2, although some overlap exists between both isoforms, hence differentially regulates excitatory synaptic transmission. In hippocampal neuron cell cultures, isoform 1 controls both miniature excitatory postsynaptic current amplitude and frequency. Isoform 1 may regulate genes involved in hippocampal-dependent memory, leading to positive regulation of memory, contrary to isoform 2 that may decrease memory. Functionally, dioxygenase that plays a key role in active DNA demethylation. As isoform 1, binds to promoters, particularly to those with high CG content, however displays reduced global chromatin affinity compared with isoform 1, leading to decreased global DNA demethylation compared with isoform 1. Contrary to isoform 1, isoform 2 localizes during S phase to sites of ongoing DNA replication in heterochromatin, causing a significant de novo 5hmC formation, globally, and more so in heterochromatin, including LINE 1 interspersed DNA repeats leading to their activation. In hippocampal neurons, isoform 2 regulates the expression of a unique subset of genes compared to isoform 1, although some overlap between both isoforms, hence differentially regulates excitatory synaptic transmission. In hippocampal neuron cell cultures, isoform 2 controls miniature excitatory postsynaptic current frequency, but not amplitude. Isoform 2 may regulate genes involved in hippocampal-dependent memory, leading to negative regulation of memory, contrary to isoform 1 that may improve memory. In immature and partially differentiated gonadotrope cells, directly represses luteinizing hormone gene LHB expression and does not catalyze 5hmC at the gene promoter. The polypeptide is Methylcytosine dioxygenase TET1 (Homo sapiens (Human)).